The primary structure comprises 161 residues: Phosphopantetheine adenylyltransferase (161 aa).

Position 11 (S11) interacts with substrate. ATP contacts are provided by residues S11–F12 and H19. Positions 43, 75, and 89 each coordinate substrate. ATP contacts are provided by residues G90–R92, E100, and Y125–S131.

Belongs to the bacterial CoaD family. As to quaternary structure, homohexamer. Mg(2+) serves as cofactor.

It is found in the cytoplasm. The enzyme catalyses (R)-4'-phosphopantetheine + ATP + H(+) = 3'-dephospho-CoA + diphosphate. The protein operates within cofactor biosynthesis; coenzyme A biosynthesis; CoA from (R)-pantothenate: step 4/5. Its function is as follows. Reversibly transfers an adenylyl group from ATP to 4'-phosphopantetheine, yielding dephospho-CoA (dPCoA) and pyrophosphate. This chain is Phosphopantetheine adenylyltransferase, found in Staphylococcus carnosus (strain TM300).